Reading from the N-terminus, the 625-residue chain is TORTIFOLIA1-like protein 4 (625 aa).

Residues 1-34 form a disordered region; it reads MSVHGRFPASPPISLSPSSSSTSPSSQSPSTPPD. Low complexity predominate over residues 12–29; sequence PISLSPSSSSTSPSSQSP. 5 HEAT repeats span residues 69–106, 110–147, 149–186, 190–227, and 230–268; these read DSFS…YHGD, PHLA…HVTR, PFAS…AATD, EQLR…AGGA, and KPVL…AEDL. The segment at 391–466 is disordered; the sequence is SVDNKGPHFT…VKNCKDDVEE (76 aa). Basic and acidic residues-rich tracts occupy residues 404 to 413, 420 to 434, and 455 to 466; these read KSSEETEEKA, IIKH…EDSK, and DSVKNCKDDVEE. Residue serine 475 is modified to Phosphoserine. Positions 582–625 are disordered; sequence GMRESTDTNNGQRGGSVFQKRSRRDQFQDCMHTTLQKPTTRLST. The segment covering 612–625 has biased composition (polar residues); that stretch reads MHTTLQKPTTRLST.

The chain is TORTIFOLIA1-like protein 4 from Arabidopsis thaliana (Mouse-ear cress).